A 121-amino-acid polypeptide reads, in one-letter code: uncharacterized protein (121 aa).

Residues 9–29 form a helical membrane-spanning segment; it reads LTILIASIYIIFFVNAAPTLY. Positions 91–121 are disordered; that stretch reads EELPTYPPTMTTPLETTPLDTSPPVLPSAIP. Low complexity predominate over residues 98 to 113; sequence PTMTTPLETTPLDTSP.

The protein localises to the host membrane. This is an uncharacterized protein from Alcelaphine herpesvirus 1 (strain C500) (AlHV-1).